Here is a 220-residue protein sequence, read N- to C-terminus: Ribosomal RNA small subunit methyltransferase Nep1 (220 aa).

Residues glycine 178, glycine 183, and 196–201 (LYREPL) contribute to the S-adenosyl-L-methionine site.

It belongs to the class IV-like SAM-binding methyltransferase superfamily. RNA methyltransferase NEP1 family. In terms of assembly, homodimer.

The catalysed reaction is a pseudouridine in rRNA + S-adenosyl-L-methionine = an N(1)-methylpseudouridine in rRNA + S-adenosyl-L-homocysteine + H(+). In terms of biological role, methyltransferase involved in ribosomal biogenesis. Specifically catalyzes the N1-methylation of the pseudouridine corresponding to position 914 in M.jannaschii 16S rRNA. In Thermococcus kodakarensis (strain ATCC BAA-918 / JCM 12380 / KOD1) (Pyrococcus kodakaraensis (strain KOD1)), this protein is Ribosomal RNA small subunit methyltransferase Nep1.